We begin with the raw amino-acid sequence, 388 residues long: Ferrochelatase (388 aa).

Fe cation is bound by residues H196 and E277.

The protein belongs to the ferrochelatase family.

The protein resides in the cytoplasm. It catalyses the reaction heme b + 2 H(+) = protoporphyrin IX + Fe(2+). It participates in porphyrin-containing compound metabolism; protoheme biosynthesis; protoheme from protoporphyrin-IX: step 1/1. Functionally, catalyzes the ferrous insertion into protoporphyrin IX. The sequence is that of Ferrochelatase from Nostoc punctiforme (strain ATCC 29133 / PCC 73102).